Reading from the N-terminus, the 323-residue chain is Acetyl esterase (323 aa).

The Involved in the stabilization of the negatively charged intermediate by the formation of the oxyanion hole signature appears at 91 to 93 (HGG). Catalysis depends on residues Ser165, Asp262, and His292.

It belongs to the 'GDXG' lipolytic enzyme family. As to quaternary structure, homodimer. Interacts with MalT and MelA.

It localises to the cytoplasm. Its function is as follows. Displays esterase activity towards short chain fatty esters (acyl chain length of up to 8 carbons). Able to hydrolyze triacetylglycerol (triacetin) and tributyrylglycerol (tributyrin), but not trioleylglycerol (triolein) or cholesterol oleate. Negatively regulates MalT activity by antagonizing maltotriose binding. Inhibits MelA galactosidase activity. This chain is Acetyl esterase, found in Salmonella schwarzengrund (strain CVM19633).